The primary structure comprises 465 residues: RuvB-like helicase 2 (465 aa).

73 to 80 (GEPSTGKT) is an ATP binding site.

It belongs to the RuvB family. Forms homohexameric rings. May form a dodecamer with pont made of two stacked hexameric rings. Component of the chromatin remodeling Ino80 complex.

Its subcellular location is the nucleus. It catalyses the reaction ATP + H2O = ADP + phosphate + H(+). Functionally, acts as a transcriptional coactivator in Wg signaling. Proposed core component of the chromatin remodeling Ino80 complex which is involved in transcriptional regulation, DNA replication and probably DNA repair. This chain is RuvB-like helicase 2, found in Aedes aegypti (Yellowfever mosquito).